The chain runs to 635 residues: Sulfite reductase [ferredoxin], chloroplastic (635 aa).

The transit peptide at 1–50 directs the protein to the chloroplast; the sequence is MSGAIGGAEVHGFRGAAAQLPRSRVLGRPIRVAPPAAARPGGASAGSIRA. 2 disordered regions span residues 31 to 50 and 245 to 267; these read RVAP…SIRA and PEVT…PEPI. Residues 245-254 show a composition bias toward basic and acidic residues; that stretch reads PEVTKARNDN. [4Fe-4S] cluster-binding residues include C494, C500, C540, and C544. C544 serves as a coordination point for siroheme.

This sequence belongs to the nitrite and sulfite reductase 4Fe-4S domain family. As to quaternary structure, monomer. Interacts with ferredoxin. Requires siroheme as cofactor. It depends on [4Fe-4S] cluster as a cofactor. Phosphorylated; this phosphorylation reduces DNA-binding. As to expression, present in roots and leaves (at protein level). In leaves, sulfite reductase activity is detected in both bundle sheath and mesophyll cell types.

Its subcellular location is the plastid. The protein localises to the chloroplast stroma. The protein resides in the chloroplast nucleoid. It localises to the plastid stroma. The catalysed reaction is hydrogen sulfide + 6 oxidized [2Fe-2S]-[ferredoxin] + 3 H2O = sulfite + 6 reduced [2Fe-2S]-[ferredoxin] + 7 H(+). With respect to regulation, inhibited by the tryptophan-modifying reagent, N-bromosuccinimide (NBS), by the lysine-modifying reagent, N-acetylsuccinimide and by the arginine-modifying reagent, phenylglyoxal. Complex formation with ferredoxin prevents these inhibitions. Functionally, essential protein with sulfite reductase activity required in assimilatory sulfate reduction pathway during both primary and secondary metabolism and thus involved in development and growth. Its function is as follows. DNA-binding protein that binds to both double-stranded and single-stranded DNA without significant sequence specificity to reversibly repress the transcriptional activity of chloroplast nucleoids by promoting DNA compaction and possibly regulate DNA replication. The sequence is that of Sulfite reductase [ferredoxin], chloroplastic (SIR) from Zea mays (Maize).